The sequence spans 707 residues: Trans-feruloyl-CoA synthase FCS1 (707 aa).

ATP is bound by residues His-267 and 524–535 (ARAIGYPVVMKA). The 52-residue stretch at 498 to 549 (KELLRPLGIAFPPSQFAANAEAAAAAARAIGYPVVMKAQAAALGHKSDAGGV) folds into the ATP-grasp domain.

The protein in the N-terminal section; belongs to the acetate CoA ligase alpha subunit family. In the C-terminal section; belongs to the acetate CoA ligase beta subunit family. In terms of assembly, homodimer.

It carries out the reaction (E)-ferulate + ATP + CoA = (E)-feruloyl-CoA + ADP + phosphate. Its function is as follows. Catalyzes the formation of feruloyl-CoA, ADP and phosphate from ferulate, CoA and ATP. This chain is Trans-feruloyl-CoA synthase FCS1, found in Unknown prokaryotic organism.